The sequence spans 215 residues: Cytochrome b6 (215 aa).

The chain crosses the membrane as a helical span at residues 32–52 (IFYCIGGITFTCFLVQVATGF). Heme c is bound at residue Cys35. Residues His86 and His100 each coordinate heme b. Helical transmembrane passes span 90–110 (ASMM…TGGF), 116–136 (LTWV…VTGY), and 186–206 (LHTF…FLMI). Heme b contacts are provided by His187 and His202.

It belongs to the cytochrome b family. PetB subfamily. As to quaternary structure, the 4 large subunits of the cytochrome b6-f complex are cytochrome b6, subunit IV (17 kDa polypeptide, PetD), cytochrome f and the Rieske protein, while the 4 small subunits are PetG, PetL, PetM and PetN. The complex functions as a dimer. It depends on heme b as a cofactor. Heme c serves as cofactor.

It localises to the plastid. It is found in the chloroplast thylakoid membrane. Component of the cytochrome b6-f complex, which mediates electron transfer between photosystem II (PSII) and photosystem I (PSI), cyclic electron flow around PSI, and state transitions. The polypeptide is Cytochrome b6 (Chlorella vulgaris (Green alga)).